The sequence spans 279 residues: Acetyl-coenzyme A carboxylase carboxyl transferase subunit beta (279 aa).

In terms of domain architecture, CoA carboxyltransferase N-terminal spans 23–279 (MWWKCDECGA…IVRLMTMLAP (257 aa)). Residues Cys27, Cys30, Cys46, and Cys49 each coordinate Zn(2+). A C4-type zinc finger spans residues 27–49 (CDECGAMLHKKQLEDNFYTCSEC).

This sequence belongs to the AccD/PCCB family. In terms of assembly, acetyl-CoA carboxylase is a heterohexamer composed of biotin carboxyl carrier protein (AccB), biotin carboxylase (AccC) and two subunits each of ACCase subunit alpha (AccA) and ACCase subunit beta (AccD). Zn(2+) is required as a cofactor.

It localises to the cytoplasm. It carries out the reaction N(6)-carboxybiotinyl-L-lysyl-[protein] + acetyl-CoA = N(6)-biotinyl-L-lysyl-[protein] + malonyl-CoA. It participates in lipid metabolism; malonyl-CoA biosynthesis; malonyl-CoA from acetyl-CoA: step 1/1. Functionally, component of the acetyl coenzyme A carboxylase (ACC) complex. Biotin carboxylase (BC) catalyzes the carboxylation of biotin on its carrier protein (BCCP) and then the CO(2) group is transferred by the transcarboxylase to acetyl-CoA to form malonyl-CoA. The sequence is that of Acetyl-coenzyme A carboxylase carboxyl transferase subunit beta from Chlorobium phaeobacteroides (strain DSM 266 / SMG 266 / 2430).